Consider the following 122-residue polypeptide: Double-headed protease inhibitor, submandibular gland (122 aa).

2 consecutive Kazal-like domains span residues 10–70 (GGRK…NCDI) and 71–121 (ECTQ…QCES). 6 disulfides stabilise this stretch: Cys-16–Cys-50, Cys-28–Cys-47, Cys-36–Cys-68, Cys-72–Cys-101, Cys-79–Cys-98, and Cys-87–Cys-119.

The protein resides in the secreted. In terms of biological role, this inhibitor is composed of two homologous actively inhibiting halves: one which inhibits trypsin, the other which inhibits elastase. In Meles meles (Eurasian badger), this protein is Double-headed protease inhibitor, submandibular gland.